A 351-amino-acid chain; its full sequence is UDP-3-O-acylglucosamine N-acyltransferase (351 aa).

H240 acts as the Proton acceptor in catalysis.

The protein belongs to the transferase hexapeptide repeat family. LpxD subfamily. As to quaternary structure, homotrimer.

The enzyme catalyses a UDP-3-O-[(3R)-3-hydroxyacyl]-alpha-D-glucosamine + a (3R)-hydroxyacyl-[ACP] = a UDP-2-N,3-O-bis[(3R)-3-hydroxyacyl]-alpha-D-glucosamine + holo-[ACP] + H(+). It functions in the pathway bacterial outer membrane biogenesis; LPS lipid A biosynthesis. Its function is as follows. Catalyzes the N-acylation of UDP-3-O-acylglucosamine using 3-hydroxyacyl-ACP as the acyl donor. Is involved in the biosynthesis of lipid A, a phosphorylated glycolipid that anchors the lipopolysaccharide to the outer membrane of the cell. This is UDP-3-O-acylglucosamine N-acyltransferase from Methylacidiphilum infernorum (isolate V4) (Methylokorus infernorum (strain V4)).